A 44-amino-acid chain; its full sequence is Photosystem I reaction center subunit IX (44 aa).

The chain crosses the membrane as a helical span at residues 7–27; the sequence is YLSTAPVLATLWFGSLAGLLI.

This sequence belongs to the PsaJ family.

It localises to the plastid. The protein resides in the chloroplast thylakoid membrane. Its function is as follows. May help in the organization of the PsaE and PsaF subunits. The sequence is that of Photosystem I reaction center subunit IX from Cycas taitungensis (Prince sago).